A 146-amino-acid polypeptide reads, in one-letter code: VHLTGEEKSAVTALWGKVNVDEVGGEALGRLLVVYPWTQRFFESFGDLSTPDAVMNNPKVKAHGKKVLGAFSDGLTHLDNLKGTFAHLSELHCDKLHVDPENFRLLGNVLVCVLAHHFGKEFTPVVQAAYQKVVAGVANALAHKYH.

Valine 1 is modified (N-acetylvaline). The Globin domain occupies 2–146; it reads HLTGEEKSAV…VANALAHKYH (145 aa). At threonine 12 the chain carries Phosphothreonine. Position 44 is a phosphoserine (serine 44). Lysine 59 bears the N6-acetyllysine mark. Position 63 (histidine 63) interacts with heme b. Position 82 is an N6-acetyllysine (lysine 82). Heme b is bound at residue histidine 92. Cysteine 93 carries the S-nitrosocysteine modification. At lysine 144 the chain carries N6-acetyllysine.

Belongs to the globin family. As to quaternary structure, heterotetramer of two alpha chains and two beta chains. In terms of tissue distribution, red blood cells.

Functionally, involved in oxygen transport from the lung to the various peripheral tissues. This is Hemoglobin subunit beta (HBB) from Mico argentatus (Silvery marmoset).